The primary structure comprises 476 residues: 3-isopropylmalate dehydratase large subunit (476 aa).

Positions 353, 413, and 416 each coordinate [4Fe-4S] cluster.

It belongs to the aconitase/IPM isomerase family. LeuC type 1 subfamily. In terms of assembly, heterodimer of LeuC and LeuD. [4Fe-4S] cluster serves as cofactor.

It catalyses the reaction (2R,3S)-3-isopropylmalate = (2S)-2-isopropylmalate. The protein operates within amino-acid biosynthesis; L-leucine biosynthesis; L-leucine from 3-methyl-2-oxobutanoate: step 2/4. In terms of biological role, catalyzes the isomerization between 2-isopropylmalate and 3-isopropylmalate, via the formation of 2-isopropylmaleate. This is 3-isopropylmalate dehydratase large subunit from Yersinia pseudotuberculosis serotype IB (strain PB1/+).